Here is a 290-residue protein sequence, read N- to C-terminus: Acetylglutamate kinase (290 aa).

Substrate-binding positions include 65–66 (GG), Arg-87, and Asn-186.

This sequence belongs to the acetylglutamate kinase family. ArgB subfamily.

The protein resides in the cytoplasm. It catalyses the reaction N-acetyl-L-glutamate + ATP = N-acetyl-L-glutamyl 5-phosphate + ADP. It participates in amino-acid biosynthesis; L-arginine biosynthesis; N(2)-acetyl-L-ornithine from L-glutamate: step 2/4. Its function is as follows. Catalyzes the ATP-dependent phosphorylation of N-acetyl-L-glutamate. This chain is Acetylglutamate kinase, found in Mycolicibacterium gilvum (strain PYR-GCK) (Mycobacterium gilvum (strain PYR-GCK)).